The primary structure comprises 321 residues: Agamous-like MADS-box protein AGL80 (321 aa).

In terms of domain architecture, MADS-box spans 1 to 61 (MTRKKVKLAY…DTNPEVWPSN (61 aa)). Residues 89–114 (FLKQRIAKATETLRRQRKDSRELEMT) are a coiled coil.

As to quaternary structure, interacts with AGL61 and AGL62. Forms a heterodimer with AGL61. Interacts with MEE14/CBP1. In terms of tissue distribution, expressed in the central cell of the female gametophyte and in early endosperm. Also detected in ovaries, young siliques, roots, leaves, stems, young flowers and anthers.

It localises to the nucleus. In terms of biological role, probable transcription factor. Controls central cell differentiation during female gametophyte development. Required for the expression of DEMETER and DD46, but not for the expression of FIS2. Probable transcription factor that may function in the maintenance of the proper function of the central cell in pollen tube attraction. In Arabidopsis thaliana (Mouse-ear cress), this protein is Agamous-like MADS-box protein AGL80 (AGL80).